Here is a 96-residue protein sequence, read N- to C-terminus: Large ribosomal subunit protein bL27 (96 aa).

A propeptide spanning residues 1–9 (MLRLDLQFF) is cleaved from the precursor.

Belongs to the bacterial ribosomal protein bL27 family. In terms of processing, the N-terminus is cleaved by ribosomal processing cysteine protease Prp.

This is Large ribosomal subunit protein bL27 from Geobacillus sp. (strain WCH70).